A 706-amino-acid chain; its full sequence is Probable N(6)-adenosine-methyltransferase MT-A70-like (706 aa).

Disordered regions lie at residues Arg64–Ala114 and Thr223–Trp261. Positions Ser103–Ala114 are enriched in low complexity. Positions Leu227–Pro236 are enriched in pro residues. Residues Asp479 to Ile480 and Asp497 each bind S-adenosyl-L-methionine. The tract at residues Arg567–His580 is positively charged region required for RNA-binding. S-adenosyl-L-methionine-binding positions include Lys614, Arg637–Asn640, and Asn650–Gln651. A disordered region spans residues Ala669 to Ala706.

The protein belongs to the MT-A70-like family.

Its subcellular location is the nucleus. It carries out the reaction an adenosine in mRNA + S-adenosyl-L-methionine = an N(6)-methyladenosine in mRNA + S-adenosyl-L-homocysteine + H(+). Functionally, probable N6-methyltransferase that methylates adenosine residues of some mRNAs. N6-methyladenosine (m6A), which is present at internal sites of some mRNAs, may play a role in the efficiency of mRNA splicing, transport or translation. The sequence is that of Probable N(6)-adenosine-methyltransferase MT-A70-like from Oryza sativa subsp. japonica (Rice).